A 433-amino-acid chain; its full sequence is Putative ankyrin repeat protein R578 (433 aa).

ANK repeat units follow at residues 166-195, 197-224, 356-386, and 388-415; these read NKEIILRNAVITNNLEMLEFAIEKGAILSE, DHLIVQSIRTSNLDLIKYIFSHIDLSKL, VNPNILKTSIYCCNNFDITKYLIDNGADIHS, and PSLIKTAITSGNLKTATFLMDNGAICDE.

The polypeptide is Putative ankyrin repeat protein R578 (Acanthamoeba polyphaga mimivirus (APMV)).